A 217-amino-acid polypeptide reads, in one-letter code: Deoxyribose-phosphate aldolase (217 aa).

The active-site Proton donor/acceptor is Asp89. The active-site Schiff-base intermediate with acetaldehyde is Lys151. Lys180 acts as the Proton donor/acceptor in catalysis.

This sequence belongs to the DeoC/FbaB aldolase family. DeoC type 1 subfamily.

The protein resides in the cytoplasm. The enzyme catalyses 2-deoxy-D-ribose 5-phosphate = D-glyceraldehyde 3-phosphate + acetaldehyde. It participates in carbohydrate degradation; 2-deoxy-D-ribose 1-phosphate degradation; D-glyceraldehyde 3-phosphate and acetaldehyde from 2-deoxy-alpha-D-ribose 1-phosphate: step 2/2. Its function is as follows. Catalyzes a reversible aldol reaction between acetaldehyde and D-glyceraldehyde 3-phosphate to generate 2-deoxy-D-ribose 5-phosphate. The polypeptide is Deoxyribose-phosphate aldolase (Mycoplasma mobile (strain ATCC 43663 / 163K / NCTC 11711) (Mesomycoplasma mobile)).